The sequence spans 125 residues: Large ribosomal subunit protein bL12 (125 aa).

The protein belongs to the bacterial ribosomal protein bL12 family. In terms of assembly, homodimer. Part of the ribosomal stalk of the 50S ribosomal subunit. Forms a multimeric L10(L12)X complex, where L10 forms an elongated spine to which 2 to 4 L12 dimers bind in a sequential fashion. Binds GTP-bound translation factors.

In terms of biological role, forms part of the ribosomal stalk which helps the ribosome interact with GTP-bound translation factors. Is thus essential for accurate translation. The sequence is that of Large ribosomal subunit protein bL12 from Heliobacterium modesticaldum (strain ATCC 51547 / Ice1).